We begin with the raw amino-acid sequence, 428 residues long: MIKPIEYEQLQETLYHEKMSNGLDVYVLPKKGFNKTYAVFTTKYGSIDNRFVPLGKNEMVHVPDGIAHFLEHKLFEKADGDVFQDFSKQGASANAFTSFTRTAYLFSSTSNVERNLETLIDFVQDPYFTEKTVEKEKGIIGQEINMYDDNPDWRLYFGVIENMYKEHPVRIDIAGTVESISHITKDLLYECYETFYHPSNMLLFIVGPVDPEAIISQVRENQGKKPYTDQPEIKREEVKEQEAVFRKEKEIKMNVQGPKCLVGLKSKNPFKLGKELLKHELSMNLLLEALFGKSSAQYESLYEKGYIDETFSFDFTAEYGFGFAAIGGDTPEPDQLAEDISSMLLRAGELITAEKIELARKKKIGTFLKALNSPEYIANQFTRYAFLDMSLFDVVTVLEQITLEDVQNVIQEEIAADRLTVCKVVPKS.

H68 lines the Zn(2+) pocket. E71 functions as the Proton acceptor in the catalytic mechanism. H72 and E143 together coordinate Zn(2+).

The protein belongs to the peptidase M16 family. It depends on Zn(2+) as a cofactor.

This is an uncharacterized protein from Bacillus subtilis (strain 168).